Consider the following 553-residue polypeptide: Protein DA1-related 1 (553 aa).

The tract at residues 10-41 is disordered; the sequence is GSSHKFSDGQCNGRYREDRNLEGPRYSAEGSD. In terms of domain architecture, UIM 1 spans 42-61; it reads FDKEEIECAIALSLSEQEHV. A compositionally biased stretch (basic and acidic residues) spans 62-77; the sequence is IPQDDKGKKIIEYKSE. Residues 62–91 are disordered; it reads IPQDDKGKKIIEYKSETEEDDDDDEDEDEE. Residues 78-91 show a composition bias toward acidic residues; that stretch reads TEEDDDDDEDEDEE. The 20-residue stretch at 87 to 106 folds into the UIM 2 domain; it reads DEDEEYMRAQLEAAEEEERR. A UIM 3; degenerate domain is found at 122–141; the sequence is AQLEETEKLLAKARLEEEEM. In terms of domain architecture, UIM 4 spans 149–168; it reads EEDELLAKALQESMNVGSPP. Serine 166 is modified (phosphoserine). One can recognise an LIM zinc-binding domain in the interval 188–248; sequence RICVGCQAEI…KLCYKEQHHP (61 aa).

As to quaternary structure, interacts with ubiquitin, TCP14 and TCP15. In terms of processing, polyubiquitinated by DA2.

Acts redundantly with DA1 and DAR2 to regulate endoreduplication during leaf development. Together with DA1 and DAR2, modulates the protein stability of the transcription factors TCP14 and TCP15, which repress endoreduplication by directly regulating the expression of cell-cycle genes. This Arabidopsis thaliana (Mouse-ear cress) protein is Protein DA1-related 1.